The following is a 465-amino-acid chain: Glutamate--tRNA ligase (465 aa).

The short motif at 11-21 (PSPTGFIHLGN) is the 'HIGH' region element. The tract at residues 118 to 139 (GEKPRYDGTWRPAPGKILPPPP) is disordered. Residues 243–247 (KMSKR) carry the 'KMSKS' region motif. K246 contributes to the ATP binding site.

The protein belongs to the class-I aminoacyl-tRNA synthetase family. Glutamate--tRNA ligase type 1 subfamily. In terms of assembly, monomer.

It is found in the cytoplasm. The catalysed reaction is tRNA(Glu) + L-glutamate + ATP = L-glutamyl-tRNA(Glu) + AMP + diphosphate. Catalyzes the attachment of glutamate to tRNA(Glu) in a two-step reaction: glutamate is first activated by ATP to form Glu-AMP and then transferred to the acceptor end of tRNA(Glu). The sequence is that of Glutamate--tRNA ligase from Ralstonia pickettii (strain 12J).